The sequence spans 351 residues: Histidine protein kinase SaeS (351 aa).

Transmembrane regions (helical) follow at residues 9–29 (IIIG…IAYI) and 40–60 (TLTL…SIFI). The 54-residue stretch at 61–114 (NPLIQKIKQFNIKTKQFANGNYASNDKTFNSPKEIYELNQSFNKMASEITQQMN) folds into the HAMP domain. One can recognise a Histidine kinase domain in the interval 129–348 (NLAHDLKTPL…TMTVTLHKLD (220 aa)). His132 is subject to Phosphohistidine; by autocatalysis.

Autophosphorylated.

It is found in the cell membrane. The enzyme catalyses ATP + protein L-histidine = ADP + protein N-phospho-L-histidine.. Member of the two-component regulatory system SaeR/SaeS involved in the regulation of staphylococcal virulence factors in a strain-dependent fashion. Probably functions as a membrane-associated protein kinase that upon sensing the appropriate signal, autophosphorylates and in turn activates the cytosolic response regulator SaeR. SaeR/SaeS activates the expression of exoproteins involved in adhesion and invasion of host cells, including hemolysins (hla, hlb, hlgC), coa, DNase, spa and cell wall-associated proteins (emp, eap, fnbA, fnbB, efb). Represses the expression of type 5 capsular polysaccharide (cap operon). Also modulates the expression of several other genes. The protein is Histidine protein kinase SaeS (saeS) of Staphylococcus aureus (strain Newman).